We begin with the raw amino-acid sequence, 297 residues long: tRNA dimethylallyltransferase (297 aa).

15–22 (GPTASGKS) contacts ATP. 17–22 (TASGKS) contacts substrate. Interaction with substrate tRNA stretches follow at residues 40–43 (DSMQ) and 164–168 (QRIVR).

It belongs to the IPP transferase family. Monomer. Mg(2+) is required as a cofactor.

The enzyme catalyses adenosine(37) in tRNA + dimethylallyl diphosphate = N(6)-dimethylallyladenosine(37) in tRNA + diphosphate. Its function is as follows. Catalyzes the transfer of a dimethylallyl group onto the adenine at position 37 in tRNAs that read codons beginning with uridine, leading to the formation of N6-(dimethylallyl)adenosine (i(6)A). The protein is tRNA dimethylallyltransferase of Rhizobium leguminosarum bv. trifolii (strain WSM2304).